Consider the following 76-residue polypeptide: MAPSALLRPLSRLLAPARLPSGPSVRSKFYVREPPNAKPDWLKVGFTLGTTVFLWIYLIKQHNEDILEYKRRNGLE.

The transit peptide at 1–27 directs the protein to the mitochondrion; sequence MAPSALLRPLSRLLAPARLPSGPSVRS. Residues 41–59 form a helical membrane-spanning segment; sequence WLKVGFTLGTTVFLWIYLI.

It belongs to the complex I NDUFC1 subunit family. Complex I is composed of 45 different subunits.

It is found in the mitochondrion inner membrane. In terms of biological role, accessory subunit of the mitochondrial membrane respiratory chain NADH dehydrogenase (Complex I), that is believed not to be involved in catalysis. Complex I functions in the transfer of electrons from NADH to the respiratory chain. The immediate electron acceptor for the enzyme is believed to be ubiquinone. The polypeptide is NADH dehydrogenase [ubiquinone] 1 subunit C1, mitochondrial (NDUFC1) (Homo sapiens (Human)).